The chain runs to 99 residues: Small ribosomal subunit protein uS14m (99 aa).

The protein belongs to the universal ribosomal protein uS14 family.

It localises to the mitochondrion. The chain is Small ribosomal subunit protein uS14m (RPS14) from Marchantia polymorpha (Common liverwort).